Consider the following 125-residue polypeptide: Fatty acid-binding protein, liver-type (125 aa).

This sequence belongs to the calycin superfamily. Fatty-acid binding protein (FABP) family.

It is found in the cytoplasm. The chain is Fatty acid-binding protein, liver-type (fabp1) from Takifugu rubripes (Japanese pufferfish).